We begin with the raw amino-acid sequence, 1190 residues long: Pumilio homolog 1 (1190 aa).

Disordered regions lie at residues 38-74, 491-531, 611-675, and 744-777; these read LTSGPVGQQQPPQPPTHSALATGPHASPVGGSMGVAG, SNSA…QQTD, ANGP…NSSL, and GPVGMPLPSQGPSHSQTPPPSLSSHGSSTSLNLG. 4 stretches are compositionally biased toward low complexity: residues 491 to 508, 518 to 531, 628 to 675, and 765 to 777; these read SNSASQQNNPQSQQGQQQ, PLTPNQNQQGQQTD, QQPQ…NSSL, and LSSHGSSTSLNLG. The 343-residue stretch at 830-1172 folds into the PUM-HD domain; that stretch reads GRSRLLEDFR…HILAKLEKYY (343 aa). Pumilio repeat units follow at residues 850-885, 886-921, 922-959, 960-995, 996-1031, 1032-1067, 1068-1103, and 1107-1146; these read EIAGHIMEFSQDQHGSRFIQLKLERATPAERQLVFN, EILQAAYQLMVDVFGNYVIQKFFEFGSLEQKLALAE, RIRGHVLSLALQMYGCRVIQKALEFIPPDQQVINEMVR, ELDGHVLKCVKDQNGNHVVQKCIECVQPQSLQFIID, AFKSQVFALSTHPYGCRVIQRILEHCLPEQTLPILE, ELHQHTEQLVQDQYGNYVIQHVLEHGRPEDKSKIVA, EIRGNVLVLSQHKFASNVVEKCVTHASRTERAMLID, and TMNDGPHSALYTMMKDQYANYVVQKMIDVAEPAQRKIVMH. The adenine-nucleotide binding in RNA target stretch occupies residues 865-869; the sequence is SRFIQ. A uracil-nucleotide binding in RNA target region spans residues 901 to 905; it reads NYVIQ. An adenine-nucleotide binding in RNA target region spans residues 937–941; it reads CRVIQ. The segment at 975–979 is non-specific-nucleotide binding in RNA target; that stretch reads NHVVQ. The adenine-nucleotide binding in RNA target stretch occupies residues 1011 to 1015; that stretch reads CRVIQ. The segment at 1047-1051 is uracil-nucleotide binding in RNA target; the sequence is NYVIQ. Residues 1083 to 1087 are guanine-nucleotide binding in RNA target; that stretch reads SNVVE. Positions 1126 to 1130 are uracil-nucleotide binding in RNA target; sequence NYVVQ.

In terms of assembly, interacts with cpeb1-a; interacts with unphosphorylated cpeb1-a but not phosphorylated. Component of a complex with papd4, sympk, tacc3, parn, dazl and cpeb1. Post-translationally, phosphorylated. Phosphorylation takes place at the time of dissociation of cpeb1-a from pum1 and the translational activation of ccnb1 mRNA. As to expression, present in oocytes (at protein level).

It is found in the cytoplasm. It localises to the P-body. The protein resides in the cytoplasmic granule. Functionally, sequence-specific RNA-binding protein that acts as a post-transcriptional repressor by binding the 3'-UTR of mRNA targets. Binds to an RNA consensus sequence, the Pumilio Response Element (PRE), 5'-UGUANAUA-3', that is related to the Nanos Response Element (NRE). Mediates post-transcriptional repression of transcripts via different mechanisms: acts via direct recruitment of deadenylase complexes leading to translational inhibition and mRNA degradation. Also mediates deadenylation-independent repression by promoting accessibility of miRNAs. Acts as a post-transcriptional repressor of ccnb1 mRNA during oocyte maturation. The polypeptide is Pumilio homolog 1 (Xenopus laevis (African clawed frog)).